Reading from the N-terminus, the 354-residue chain is Sphingosine-1-phosphate phosphatase 2 (354 aa).

4 helical membrane passes run 43-63 (YLFR…FLPF), 76-96 (LVVI…ILKW), 115-135 (YGMP…LLIS), and 140-160 (YQYP…LVCL). Residues 91–99 (KDILKWPRP) are phosphatase sequence motif I. The tract at residues 118-121 (PSTH) is phosphatase sequence motif II. The Proton donor role is filled by histidine 121. The phosphatase sequence motif III stretch occupies residues 161–172 (SRLYTGMHTVLD). Histidine 168 acts as the Nucleophile in catalysis. A run of 5 helical transmembrane segments spans residues 173–193 (ILGG…AWTL), 202–222 (PLFP…YPVS), 235–255 (IVAA…FQLV), 273–293 (TDML…ILLV), and 334–354 (TSVG…LGLL).

Belongs to the type 2 lipid phosphate phosphatase family. As to expression, highly expressed in pancreatic islets. Expressed in lung, small interstince, colon, kideny and brain.

The protein resides in the endoplasmic reticulum membrane. The enzyme catalyses sphinganine 1-phosphate + H2O = sphinganine + phosphate. It catalyses the reaction sphing-4-enine 1-phosphate + H2O = sphing-4-enine + phosphate. The catalysed reaction is (4R)-hydroxysphinganine 1-phosphate + H2O = (4R)-hydroxysphinganine + phosphate. In terms of biological role, has specific phosphohydrolase activity towards sphingoid base 1-phosphates. Has high phosphohydrolase activity against dihydrosphingosine-1-phosphate and sphingosine-1-phosphate (S1P) in vitro. Sphingosine-1-phosphate phosphatase activity is needed for efficient recycling of sphingosine into the sphingolipid synthesis pathway. May play a role in attenuating intracellular sphingosine 1-phosphate (S1P) signaling. May play a role in pro-inflammatory signaling. Plays a role in the regulation of pancreatic islet beta-cell endoplasmic reticulum stress and proliferation. In Mus musculus (Mouse), this protein is Sphingosine-1-phosphate phosphatase 2.